Reading from the N-terminus, the 354-residue chain is Guanine nucleotide-binding protein G(i) subunit alpha-1 (354 aa).

The N-myristoyl glycine moiety is linked to residue glycine 2. Cysteine 3 carries the S-palmitoyl cysteine lipid modification. The region spanning arginine 32 to phenylalanine 354 is the G-alpha domain. Residues lysine 35 to threonine 48 form a G1 motif region. Residues glutamate 43–threonine 48, aspartate 150–serine 151, and leucine 175–arginine 178 each bind GTP. Serine 47 contributes to the Mg(2+) binding site. The tract at residues aspartate 173 to threonine 181 is G2 motif. Mg(2+) is bound at residue threonine 181. Residues phenylalanine 196–arginine 205 are G3 motif. GTP contacts are provided by residues aspartate 200–glutamine 204, asparagine 269–aspartate 272, and alanine 326. The tract at residues isoleucine 265–aspartate 272 is G4 motif. Positions threonine 324–threonine 329 are G5 motif.

This sequence belongs to the G-alpha family. G(i/o/t/z) subfamily. In terms of assembly, heterotrimeric G proteins are composed of 3 units; alpha, beta and gamma. The alpha chain contains the guanine nucleotide binding site. Part of a spindle orientation complex at least composed of GNAI1, GPSM2 and NUMA1. Identified in complex with the beta subunit GNB1 and the gamma subunit GNG1. Identified in complex with the beta subunit GNB1 and the gamma subunit GNG2. Component of the TAS2R14-GNAI1 complex, consisting of TAS2R14, GNAI1, GNB1 and GNG2; within the complex interacts with TAS2R14; this complex plays a role in the perception of bitterness. GTP binding causes dissociation of the heterotrimer, liberating the individual subunits so that they can interact with downstream effector proteins. Interacts (GDP-bound form) with GPSM1; this inhibits guanine nucleotide exchange and GTP binding. Interacts (GDP-bound form) with GPSM2 (via GoLoco domains); this inhibits guanine nucleotide exchange. Interacts with RGS10; this strongly enhances GTP hydrolysis. Interacts with RGS1 and RGS16; this strongly enhances GTPase activity. Interacts with RGS4. Interacts with RGS12. Interacts (via active GTP- or inactive GDP-bound forms) with RGS14 (via RGS and GoLoco domains). Interacts with RGS3, RGS6, RGS7, RGS8, RGS17, RGS18 and RGS20 (in vitro). Interacts (GDP-bound form) with RIC8A (via C-terminus); promoting GNAI1 folding and association with the plasma membrane. Interacts (inactive GDP-bound form) with NUCB1 (via GBA motif); the interaction leads to activation of GNAI1. Interacts (inactive GDP-bound form) with CCDC88C/DAPLE (via GBA motif); the interaction leads to activation of GNAI1. Interacts (inactive GDP-bound form) with CCDC8A/GIV (via GBA motif). In terms of processing, myristoylation at Gly-2 is required for membrane anchoring before palmitoylation. Palmitoylation at Cys-3 varies with membrane lipid composition.

The protein localises to the nucleus. The protein resides in the cytoplasm. Its subcellular location is the cell membrane. It is found in the cytoskeleton. It localises to the microtubule organizing center. The protein localises to the centrosome. The protein resides in the cell cortex. Its subcellular location is the membrane. The enzyme catalyses GTP + H2O = GDP + phosphate + H(+). Its function is as follows. Guanine nucleotide-binding proteins (G proteins) function as transducers downstream of G protein-coupled receptors (GPCRs) in numerous signaling cascades. The alpha chain contains the guanine nucleotide binding site and alternates between an active, GTP-bound state and an inactive, GDP-bound state. Signaling by an activated GPCR promotes GDP release and GTP binding. The alpha subunit has a low GTPase activity that converts bound GTP to GDP, thereby terminating the signal. Both GDP release and GTP hydrolysis are modulated by numerous regulatory proteins. Signaling is mediated via effector proteins, such as adenylate cyclase. Inhibits adenylate cyclase activity of ADCY1, ADCY5 and ADCY6, leading to decreased intracellular cAMP levels. The inactive GDP-bound form prevents the association of RGS14 with centrosomes and is required for the translocation of RGS14 from the cytoplasm to the plasma membrane. Required for normal cytokinesis during mitosis. Required for cortical dynein-dynactin complex recruitment during metaphase. The chain is Guanine nucleotide-binding protein G(i) subunit alpha-1 (GNAI1) from Bos taurus (Bovine).